Reading from the N-terminus, the 181-residue chain is uncharacterized protein (181 aa).

Residues 25-47 (ELANEVSAGDEEPYDDDIWESED) form a disordered region. Residues 32–47 (AGDEEPYDDDIWESED) show a composition bias toward acidic residues. The helical transmembrane segment at 149-169 (ILTLILLSCGLLMLFIGYPIL) threads the bilayer.

The protein localises to the cytoplasm. Its subcellular location is the membrane. This is an uncharacterized protein from Schizosaccharomyces pombe (strain 972 / ATCC 24843) (Fission yeast).